Consider the following 88-residue polypeptide: UPF0297 protein Ccel_2240 (88 aa).

It belongs to the UPF0297 family.

In Ruminiclostridium cellulolyticum (strain ATCC 35319 / DSM 5812 / JCM 6584 / H10) (Clostridium cellulolyticum), this protein is UPF0297 protein Ccel_2240.